The primary structure comprises 354 residues: MTLLKNDTFLRALLKQPVEYTPIWMMRQAGRYLPEYKATRAKAGSFLDLCKNTELATEVTIQPLERFDLDAAILFSDILTVPDAMGLGLYFAEGEGPKFKRAMQHEADIAKLHVPDMEKLQYVFDAVTSIRKALDGRVPLIGFSGSPFTLACYMVEGGGSKEFRTIKTMMYSRPDLLHKILDTNAQAVTAYLNAQIDAGAQAVQIFDTWGGVLSDAAFKEFSLKYIRQIVAGLKRESEGRRVPVIVFAKGGGLWLESMAQIGADALGLDWTCNIGEARRRVGNQVALQGNFDPSALFGTPESIRAEVARILADYGHGSGHVFNLGHGINQHADPEHAKILVDTVHELSRQYHGG.

Substrate is bound by residues 27–31, Asp-77, Tyr-153, Thr-208, and His-326; that span reads RQAGR.

Belongs to the uroporphyrinogen decarboxylase family. Homodimer.

It localises to the cytoplasm. The enzyme catalyses uroporphyrinogen III + 4 H(+) = coproporphyrinogen III + 4 CO2. It participates in porphyrin-containing compound metabolism; protoporphyrin-IX biosynthesis; coproporphyrinogen-III from 5-aminolevulinate: step 4/4. Its function is as follows. Catalyzes the decarboxylation of four acetate groups of uroporphyrinogen-III to yield coproporphyrinogen-III. This is Uroporphyrinogen decarboxylase from Neisseria meningitidis serogroup C / serotype 2a (strain ATCC 700532 / DSM 15464 / FAM18).